The chain runs to 152 residues: Ribosome maturation factor RimP (152 aa).

Belongs to the RimP family.

It is found in the cytoplasm. Its function is as follows. Required for maturation of 30S ribosomal subunits. The chain is Ribosome maturation factor RimP from Teredinibacter turnerae (strain ATCC 39867 / T7901).